A 387-amino-acid chain; its full sequence is Protein PHYTOCHROME KINASE SUBSTRATE 3 (387 aa).

Disordered stretches follow at residues 1–21 (MDAE…PQLL), 74–128 (HEKE…CNSQ), and 242–271 (LSTK…ASVA). Over residues 12 to 21 (QISSYKPQLL) the composition is skewed to polar residues. The segment covering 74-83 (HEKENTHDHP) has biased composition (basic and acidic residues). A compositionally biased stretch (polar residues) spans 114 to 128 (HGTPSVRSESSCNSQ). The segment covering 242–261 (LSTKNNNHNNNGNNSSMSSN) has biased composition (low complexity).

Belongs to the PKS family.

In terms of biological role, probably involved in the phytochrome signaling pathway. This is Protein PHYTOCHROME KINASE SUBSTRATE 3 (PKS3) from Arabidopsis thaliana (Mouse-ear cress).